The primary structure comprises 331 residues: Adenosine deaminase (331 aa).

Zn(2+)-binding residues include His-12 and His-14. Positions 14, 16, and 170 each coordinate substrate. Residue His-197 participates in Zn(2+) binding. Glu-200 (proton donor) is an active-site residue. A Zn(2+)-binding site is contributed by Asp-278. Residue Asp-279 participates in substrate binding.

Belongs to the metallo-dependent hydrolases superfamily. Adenosine and AMP deaminases family. Adenosine deaminase subfamily. The cofactor is Zn(2+).

It carries out the reaction adenosine + H2O + H(+) = inosine + NH4(+). The catalysed reaction is 2'-deoxyadenosine + H2O + H(+) = 2'-deoxyinosine + NH4(+). Catalyzes the hydrolytic deamination of adenosine and 2-deoxyadenosine. This Shewanella sp. (strain ANA-3) protein is Adenosine deaminase.